The primary structure comprises 444 residues: tRNA modification GTPase MnmE (444 aa).

3 residues coordinate (6S)-5-formyl-5,6,7,8-tetrahydrofolate: arginine 21, glutamate 79, and lysine 118. The region spanning 215-365 (GLNVVIVGKP…LVNEIKTNLK (151 aa)) is the TrmE-type G domain. A K(+)-binding site is contributed by asparagine 225. GTP-binding positions include 225–230 (NVGKSS), 244–250 (SDIKGTT), and 269–272 (DTAG). Residue serine 229 coordinates Mg(2+). Residues serine 244, isoleucine 246, and threonine 249 each coordinate K(+). A Mg(2+)-binding site is contributed by threonine 250. Lysine 444 is a binding site for (6S)-5-formyl-5,6,7,8-tetrahydrofolate.

It belongs to the TRAFAC class TrmE-Era-EngA-EngB-Septin-like GTPase superfamily. TrmE GTPase family. Homodimer. Heterotetramer of two MnmE and two MnmG subunits. K(+) serves as cofactor.

The protein localises to the cytoplasm. In terms of biological role, exhibits a very high intrinsic GTPase hydrolysis rate. Involved in the addition of a carboxymethylaminomethyl (cmnm) group at the wobble position (U34) of certain tRNAs, forming tRNA-cmnm(5)s(2)U34. The polypeptide is tRNA modification GTPase MnmE (Malacoplasma penetrans (strain HF-2) (Mycoplasma penetrans)).